Consider the following 492-residue polypeptide: Glutamyl-tRNA(Gln) amidotransferase subunit A, mitochondrial (492 aa).

Catalysis depends on charge relay system residues Lys-78 and Ser-159. Ser-183 acts as the Acyl-ester intermediate in catalysis.

It belongs to the amidase family. GatA subfamily. As to quaternary structure, subunit of the heterotrimeric GatCAB amidotransferase (AdT) complex, composed of A, B and C subunits.

It localises to the mitochondrion. It catalyses the reaction L-glutamyl-tRNA(Gln) + L-glutamine + ATP + H2O = L-glutaminyl-tRNA(Gln) + L-glutamate + ADP + phosphate + H(+). In terms of biological role, allows the formation of correctly charged Gln-tRNA(Gln) through the transamidation of misacylated Glu-tRNA(Gln) in the mitochondria. The reaction takes place in the presence of glutamine and ATP through an activated gamma-phospho-Glu-tRNA(Gln). This is Glutamyl-tRNA(Gln) amidotransferase subunit A, mitochondrial from Anopheles gambiae (African malaria mosquito).